Consider the following 496-residue polypeptide: Genome polyprotein (496 aa).

Residues 1-447 (SRCTHLENRD…HTVLGGAFNS (447 aa)) lie on the Extracellular side of the membrane. 6 disulfide bridges follow: Cys-3-Cys-30, Cys-60-Cys-116, Cys-60-Cys-121, Cys-74-Cys-105, Cys-92-Cys-116, and Cys-92-Cys-121. Positions 98–111 (DRGWGNHCGLFGKG) are fusion peptide. N-linked (GlcNAc...) asparagine; by host glycosylation is present at Asn-154. 2 cysteine pairs are disulfide-bonded: Cys-186–Cys-290 and Cys-307–Cys-338. The chain crosses the membrane as a helical span at residues 448–468 (IFGGVGFLPKLLMGVALAWLG). The Cytoplasmic segment spans residues 469 to 479 (LNTRNPTMSMS). The chain crosses the membrane as a helical span at residues 480–496 (FLMAGGLVLAMTLGVGA).

Homodimer; in the endoplasmic reticulum and Golgi. Post-translationally, N-glycosylated.

It localises to the virion membrane. The protein localises to the host endoplasmic reticulum membrane. Its function is as follows. Binds to host cell surface receptor and mediates fusion between viral and cellular membranes. Envelope protein is synthesized in the endoplasmic reticulum in the form of heterodimer with protein prM. They play a role in virion budding in the ER, and the newly formed immature particle is covered with 60 spikes composed of heterodimer between precursor prM and envelope protein E. The virion is transported to the Golgi apparatus where the low pH causes dissociation of PrM-E heterodimers and formation of E homodimers. prM-E cleavage is ineficient, and many virions are only partially matured. These uncleaved prM would play a role in immune evasion. This chain is Genome polyprotein, found in Bos taurus (Bovine).